We begin with the raw amino-acid sequence, 100 residues long: Urease subunit gamma (100 aa).

The protein belongs to the urease gamma subunit family. As to quaternary structure, heterotrimer of UreA (gamma), UreB (beta) and UreC (alpha) subunits. Three heterotrimers associate to form the active enzyme.

It is found in the cytoplasm. It catalyses the reaction urea + 2 H2O + H(+) = hydrogencarbonate + 2 NH4(+). It participates in nitrogen metabolism; urea degradation; CO(2) and NH(3) from urea (urease route): step 1/1. In Granulibacter bethesdensis (strain ATCC BAA-1260 / CGDNIH1), this protein is Urease subunit gamma.